The following is a 255-amino-acid chain: 5-oxoprolinase subunit A (255 aa).

The protein belongs to the LamB/PxpA family. As to quaternary structure, forms a complex composed of PxpA, PxpB and PxpC.

The enzyme catalyses 5-oxo-L-proline + ATP + 2 H2O = L-glutamate + ADP + phosphate + H(+). In terms of biological role, catalyzes the cleavage of 5-oxoproline to form L-glutamate coupled to the hydrolysis of ATP to ADP and inorganic phosphate. The polypeptide is 5-oxoprolinase subunit A (Nitrobacter hamburgensis (strain DSM 10229 / NCIMB 13809 / X14)).